A 315-amino-acid chain; its full sequence is Methionyl-tRNA formyltransferase (315 aa).

S110 to P113 provides a ligand contact to (6S)-5,6,7,8-tetrahydrofolate.

This sequence belongs to the Fmt family.

It catalyses the reaction L-methionyl-tRNA(fMet) + (6R)-10-formyltetrahydrofolate = N-formyl-L-methionyl-tRNA(fMet) + (6S)-5,6,7,8-tetrahydrofolate + H(+). Attaches a formyl group to the free amino group of methionyl-tRNA(fMet). The formyl group appears to play a dual role in the initiator identity of N-formylmethionyl-tRNA by promoting its recognition by IF2 and preventing the misappropriation of this tRNA by the elongation apparatus. The polypeptide is Methionyl-tRNA formyltransferase (Cutibacterium acnes (strain DSM 16379 / KPA171202) (Propionibacterium acnes)).